Here is a 296-residue protein sequence, read N- to C-terminus: Ribose import binding protein RbsB (296 aa).

The first 25 residues, 1-25 (MNMKKLATLVSAVALSATVSANAMA), serve as a signal peptide directing secretion.

This sequence belongs to the bacterial solute-binding protein 2 family. As to quaternary structure, the complex is composed of an ATP-binding protein (RbsA), two transmembrane proteins (RbsC) and a solute-binding protein (RbsB).

It localises to the periplasm. Part of the ABC transporter complex RbsABC involved in ribose import. Binds ribose. Also serves as the primary chemoreceptor for chemotaxis. The protein is Ribose import binding protein RbsB of Escherichia coli (strain K12).